We begin with the raw amino-acid sequence, 515 residues long: Maturase K (515 aa).

Belongs to the intron maturase 2 family. MatK subfamily.

It is found in the plastid. The protein localises to the chloroplast. Usually encoded in the trnK tRNA gene intron. Probably assists in splicing its own and other chloroplast group II introns. In Pinus halepensis (Aleppo pine), this protein is Maturase K.